Consider the following 213-residue polypeptide: Kynurenine formamidase (213 aa).

Residue Trp20 participates in substrate binding. The Zn(2+) site is built by His50, His54, and Asp56. The Proton donor/acceptor role is filled by His60. 2 residues coordinate Zn(2+): His161 and Glu173.

Belongs to the Cyclase 1 superfamily. KynB family. In terms of assembly, homodimer. The cofactor is Zn(2+).

It catalyses the reaction N-formyl-L-kynurenine + H2O = L-kynurenine + formate + H(+). It participates in amino-acid degradation; L-tryptophan degradation via kynurenine pathway; L-kynurenine from L-tryptophan: step 2/2. Catalyzes the hydrolysis of N-formyl-L-kynurenine to L-kynurenine, the second step in the kynurenine pathway of tryptophan degradation. In Pseudomonas aeruginosa (strain ATCC 15692 / DSM 22644 / CIP 104116 / JCM 14847 / LMG 12228 / 1C / PRS 101 / PAO1), this protein is Kynurenine formamidase.